The sequence spans 454 residues: Growth/differentiation factor 9 (454 aa).

The signal sequence occupies residues 1-24; it reads MARPNKFLLWFCCFAWLCFPISLG. Positions 25-319 are excised as a propeptide; sequence SQASGGEAQI…GRSSHHRHRR (295 aa). Asparagine 106, asparagine 163, asparagine 236, asparagine 255, and asparagine 268 each carry an N-linked (GlcNAc...) asparagine glycan. The disordered stretch occupies residues 303 to 330; sequence GEEAAEDGRSSHHRHRRGQETVSSELKK. The residue at position 325 (serine 325) is a Phosphoserine; by CK. Asparagine 338 carries N-linked (GlcNAc...) asparagine glycosylation. Disulfide bonds link cysteine 353-cysteine 419, cysteine 382-cysteine 451, and cysteine 386-cysteine 453.

It belongs to the TGF-beta family. In terms of assembly, homodimer or heterodimer (Potential). But, in contrast to other members of this family, cannot be disulfide-linked. In terms of processing, phosphorylated; phosphorylation is critical for GDF9 function. In vitro, can be phosphorylated by CK at Ser-325. Expressed in ovarian granulosa cells. Present in oocytes of primary follicles (at protein level).

The protein resides in the secreted. Functionally, required for ovarian folliculogenesis. Promotes primordial follicle development. Stimulates granulosa cell proliferation. Promotes cell transition from G0/G1 to S and G2/M phases, through an increase of CCND1 and CCNE1 expression, and RB1 phosphorylation. It regulates STAR expression and cAMP-dependent progesterone release in granulosa and thecal cells. Attenuates the suppressive effects of activin A on STAR expression and progesterone production by increasing the expression of inhibin B. It suppresses FST and FSTL3 production in granulosa-lutein cells. The protein is Growth/differentiation factor 9 (GDF9) of Homo sapiens (Human).